Consider the following 442-residue polypeptide: Chromosomal replication initiator protein DnaA (442 aa).

A domain I, interacts with DnaA modulators region spans residues 1-68 (MDAWPRCLER…ELLAYFVGNG (68 aa)). Residues 68–104 (GDVALAVGSRPRAPEPAPAPVAVPSAPQAAPIVPFAG) are domain II. The interval 105 to 322 (NLDSHYTFAN…GALNTLVARA (218 aa)) is domain III, AAA+ region. The ATP site is built by G150, G152, K153, and T154. The tract at residues 323–442 (NFTGRSITVE…WEKLIRKLSE (120 aa)) is domain IV, binds dsDNA.

This sequence belongs to the DnaA family. In terms of assembly, oligomerizes as a right-handed, spiral filament on DNA at oriC.

The protein localises to the cytoplasm. Its function is as follows. Plays an essential role in the initiation and regulation of chromosomal replication. ATP-DnaA binds to the origin of replication (oriC) to initiate formation of the DNA replication initiation complex once per cell cycle. Binds the DnaA box (a 9 base pair repeat at the origin) and separates the double-stranded (ds)DNA. Forms a right-handed helical filament on oriC DNA; dsDNA binds to the exterior of the filament while single-stranded (ss)DNA is stabiized in the filament's interior. The ATP-DnaA-oriC complex binds and stabilizes one strand of the AT-rich DNA unwinding element (DUE), permitting loading of DNA polymerase. After initiation quickly degrades to an ADP-DnaA complex that is not apt for DNA replication. Binds acidic phospholipids. This chain is Chromosomal replication initiator protein DnaA, found in Xanthomonas axonopodis pv. citri (strain 306).